Reading from the N-terminus, the 393-residue chain is Bone morphogenetic protein 15 (393 aa).

An N-terminal signal peptide occupies residues 1–25 (MVLLSILRILLWGLVLFMEHRVQMT). The propeptide occupies 26 to 268 (QVGQPSIAHL…DPSLLLRRAR (243 aa)). N-linked (GlcNAc...) asparagine glycosylation is found at Asn-86 and Asn-237. Intrachain disulfides connect Cys-292–Cys-358, Cys-321–Cys-390, and Cys-325–Cys-392. N-linked (GlcNAc...) asparagine glycosylation occurs at Asn-374.

Belongs to the TGF-beta family. In terms of assembly, homodimer. But, in contrast to other members of this family, cannot be disulfide-linked.

It localises to the secreted. Functionally, may be involved in follicular development. Oocyte-specific growth/differentiation factor that stimulates folliculogenesis and granulosa cell (GC) growth. In Ovis aries (Sheep), this protein is Bone morphogenetic protein 15 (BMP15).